A 637-amino-acid chain; its full sequence is 1-deoxy-D-xylulose-5-phosphate synthase (637 aa).

Thiamine diphosphate-binding positions include His-76 and Gly-117–Ser-119. Residue Asp-148 coordinates Mg(2+). Thiamine diphosphate is bound by residues Gly-149–Ala-150, Asn-177, Tyr-294, and Glu-381. Asn-177 provides a ligand contact to Mg(2+).

This sequence belongs to the transketolase family. DXPS subfamily. Homodimer. It depends on Mg(2+) as a cofactor. The cofactor is thiamine diphosphate.

The catalysed reaction is D-glyceraldehyde 3-phosphate + pyruvate + H(+) = 1-deoxy-D-xylulose 5-phosphate + CO2. It functions in the pathway metabolic intermediate biosynthesis; 1-deoxy-D-xylulose 5-phosphate biosynthesis; 1-deoxy-D-xylulose 5-phosphate from D-glyceraldehyde 3-phosphate and pyruvate: step 1/1. Catalyzes the acyloin condensation reaction between C atoms 2 and 3 of pyruvate and glyceraldehyde 3-phosphate to yield 1-deoxy-D-xylulose-5-phosphate (DXP). This chain is 1-deoxy-D-xylulose-5-phosphate synthase, found in Neisseria meningitidis serogroup A / serotype 4A (strain DSM 15465 / Z2491).